The primary structure comprises 152 residues: Large ribosomal subunit protein uL11 (152 aa).

The protein belongs to the universal ribosomal protein uL11 family. In terms of assembly, part of the ribosomal stalk of the 50S ribosomal subunit. Interacts with L10 and the large rRNA to form the base of the stalk. L10 forms an elongated spine to which L12 dimers bind in a sequential fashion forming a multimeric L10(L12)X complex. In terms of processing, one or more lysine residues are methylated.

Functionally, forms part of the ribosomal stalk which helps the ribosome interact with GTP-bound translation factors. In Mycoplasmoides gallisepticum (strain R(low / passage 15 / clone 2)) (Mycoplasma gallisepticum), this protein is Large ribosomal subunit protein uL11.